Here is a 531-residue protein sequence, read N- to C-terminus: Ribosomal protein uS12 methylthiotransferase RimO (531 aa).

Composition is skewed to polar residues over residues 1 to 19 (MPNISTESVNTTIAPSQPA) and 55 to 67 (HNQNRSVEQSSEV). The segment at 1–77 (MPNISTESVN…VSAASAKTTT (77 aa)) is disordered. Positions 68 to 77 (VSAASAKTTT) are enriched in low complexity. Residues 88 to 198 (PKIGFVSLGC…VIRAVALHVP (111 aa)) form the MTTase N-terminal domain. Residues Cys97, Cys133, Cys162, Cys236, Cys240, and Cys243 each coordinate [4Fe-4S] cluster. Residues 222–459 (LTPSHYAYLK…MTLQQDISAQ (238 aa)) enclose the Radical SAM core domain. In terms of domain architecture, TRAM spans 462 to 531 (QEKIGKTLMV…EYDLFASYKG (70 aa)).

It belongs to the methylthiotransferase family. RimO subfamily. [4Fe-4S] cluster serves as cofactor.

Its subcellular location is the cytoplasm. It catalyses the reaction L-aspartate(89)-[ribosomal protein uS12]-hydrogen + (sulfur carrier)-SH + AH2 + 2 S-adenosyl-L-methionine = 3-methylsulfanyl-L-aspartate(89)-[ribosomal protein uS12]-hydrogen + (sulfur carrier)-H + 5'-deoxyadenosine + L-methionine + A + S-adenosyl-L-homocysteine + 2 H(+). Catalyzes the methylthiolation of an aspartic acid residue of ribosomal protein uS12. This is Ribosomal protein uS12 methylthiotransferase RimO from Psychrobacter cryohalolentis (strain ATCC BAA-1226 / DSM 17306 / VKM B-2378 / K5).